The chain runs to 193 residues: Putative RING finger protein ORF38 (193 aa).

The RING-type zinc-finger motif lies at 12–50; that stretch reads CCICLDDEDVDRDNTIPCRHTVCRTCYVKPMLDQCPVCR.

The protein is Putative RING finger protein ORF38 of Magallana gigas (Pacific oyster).